The primary structure comprises 120 residues: Large ribosomal subunit protein uL18 (120 aa).

It belongs to the universal ribosomal protein uL18 family. In terms of assembly, part of the 50S ribosomal subunit; part of the 5S rRNA/L5/L18/L25 subcomplex. Contacts the 5S and 23S rRNAs.

In terms of biological role, this is one of the proteins that bind and probably mediate the attachment of the 5S RNA into the large ribosomal subunit, where it forms part of the central protuberance. The chain is Large ribosomal subunit protein uL18 from Staphylococcus saprophyticus subsp. saprophyticus (strain ATCC 15305 / DSM 20229 / NCIMB 8711 / NCTC 7292 / S-41).